The following is a 179-amino-acid chain: Large ribosomal subunit protein uL5 (179 aa).

The protein belongs to the universal ribosomal protein uL5 family. In terms of assembly, part of the 50S ribosomal subunit; part of the 5S rRNA/L5/L18/L25 subcomplex. Contacts the 5S rRNA and the P site tRNA. Forms a bridge to the 30S subunit in the 70S ribosome.

Its function is as follows. This is one of the proteins that bind and probably mediate the attachment of the 5S RNA into the large ribosomal subunit, where it forms part of the central protuberance. In the 70S ribosome it contacts protein S13 of the 30S subunit (bridge B1b), connecting the 2 subunits; this bridge is implicated in subunit movement. Contacts the P site tRNA; the 5S rRNA and some of its associated proteins might help stabilize positioning of ribosome-bound tRNAs. This chain is Large ribosomal subunit protein uL5, found in Clostridium botulinum (strain Alaska E43 / Type E3).